A 192-amino-acid polypeptide reads, in one-letter code: Molybdenum cofactor guanylyltransferase (192 aa).

GTP is bound by residues Lys21, Asp67, and Asp101. Asp101 is a binding site for Mg(2+).

Belongs to the MobA family. In terms of assembly, monomer. Requires Mg(2+) as cofactor.

The protein localises to the cytoplasm. It catalyses the reaction Mo-molybdopterin + GTP + H(+) = Mo-molybdopterin guanine dinucleotide + diphosphate. Functionally, transfers a GMP moiety from GTP to Mo-molybdopterin (Mo-MPT) cofactor (Moco or molybdenum cofactor) to form Mo-molybdopterin guanine dinucleotide (Mo-MGD) cofactor. This chain is Molybdenum cofactor guanylyltransferase, found in Neisseria meningitidis serogroup C / serotype 2a (strain ATCC 700532 / DSM 15464 / FAM18).